We begin with the raw amino-acid sequence, 769 residues long: Calcium up-regulated protein F (769 aa).

The segment at 1 to 21 (MINIKDISKSSNQSEEKSLKG) is disordered. 2 consecutive Ricin B-type lectin domains span residues 25–145 (KTKY…WTTF) and 116–249 (QGNG…WGIN).

The protein belongs to the cup family.

It is found in the cytoplasm. The protein resides in the membrane. Functionally, may play an important role in stabilizing and/or regulating the cell membrane during Ca(2+) stress or certain stages of development. The sequence is that of Calcium up-regulated protein F (cupF) from Dictyostelium discoideum (Social amoeba).